The primary structure comprises 474 residues: Glycogen synthase (474 aa).

ADP-alpha-D-glucose is bound at residue Lys15.

The protein belongs to the glycosyltransferase 1 family. Bacterial/plant glycogen synthase subfamily.

It carries out the reaction [(1-&gt;4)-alpha-D-glucosyl](n) + ADP-alpha-D-glucose = [(1-&gt;4)-alpha-D-glucosyl](n+1) + ADP + H(+). The protein operates within glycan biosynthesis; glycogen biosynthesis. In terms of biological role, synthesizes alpha-1,4-glucan chains using ADP-glucose. This is Glycogen synthase from Chlamydia trachomatis serovar D (strain ATCC VR-885 / DSM 19411 / UW-3/Cx).